Reading from the N-terminus, the 624-residue chain is Bifunctional protein ArgH (624 aa).

Residues 1 to 466 (MALWGGRFSQ…QERDNAGVKV (466 aa)) form an argininosuccinate lyase region. The region spanning 464–614 (VKVRPARLTD…DEVALEVNLQ (151 aa)) is the N-acetyltransferase domain. The tract at residues 467–624 (RPARLTDLDA…EQVIIKSSVA (158 aa)) is probable acetyltransferase.

It in the N-terminal section; belongs to the lyase 1 family. Argininosuccinate lyase subfamily.

The protein localises to the cytoplasm. The catalysed reaction is 2-(N(omega)-L-arginino)succinate = fumarate + L-arginine. The protein operates within amino-acid biosynthesis; L-arginine biosynthesis; L-arginine from L-ornithine and carbamoyl phosphate: step 3/3. This Aliivibrio fischeri (strain ATCC 700601 / ES114) (Vibrio fischeri) protein is Bifunctional protein ArgH (argH).